Here is a 267-residue protein sequence, read N- to C-terminus: MKKFTVLTLFPEMFNNFMTTSIIKKALYEKLIAIKIINIRDYSIGKHYQVDDYQYGGGEGMVLMIEPLVAAIKAQQTRDSVTILLTPQGKQYVQEQVQQFAANDNDLILVCGHYEGFDERILYYIDYELSIGDYILTGGELASMVVIDSVTRLCENVINTQSHLNDSFSKNLLDYPVYTKPVEYGGHYVPEVLLSGHHQKIAQWREYEALKKTWLKRPYLLEKKILTTEQQIFLEKIKNEKSFNDRRKEKNSYEDEFNRRNYKRSTS.

S-adenosyl-L-methionine-binding positions include G112 and 131 to 136 (IGDYIL). Over residues 245–259 (DRRKEKNSYEDEFNR) the composition is skewed to basic and acidic residues. The tract at residues 245-267 (DRRKEKNSYEDEFNRRNYKRSTS) is disordered.

This sequence belongs to the RNA methyltransferase TrmD family. In terms of assembly, homodimer.

The protein resides in the cytoplasm. The enzyme catalyses guanosine(37) in tRNA + S-adenosyl-L-methionine = N(1)-methylguanosine(37) in tRNA + S-adenosyl-L-homocysteine + H(+). Functionally, specifically methylates guanosine-37 in various tRNAs. This chain is tRNA (guanine-N(1)-)-methyltransferase, found in Spiroplasma kunkelii.